The chain runs to 296 residues: Cytidine deaminase (296 aa).

CMP/dCMP-type deaminase domains are found at residues 48–168 and 187–296; these read DADA…FGPV and QNMN…FIEE. 89–91 is a binding site for substrate; sequence NME. A Zn(2+)-binding site is contributed by His-102. Glu-104 serves as the catalytic Proton donor. Residues Cys-129 and Cys-132 each coordinate Zn(2+).

It belongs to the cytidine and deoxycytidylate deaminase family. Homodimer. The cofactor is Zn(2+).

It carries out the reaction cytidine + H2O + H(+) = uridine + NH4(+). It catalyses the reaction 2'-deoxycytidine + H2O + H(+) = 2'-deoxyuridine + NH4(+). In terms of biological role, this enzyme scavenges exogenous and endogenous cytidine and 2'-deoxycytidine for UMP synthesis. The sequence is that of Cytidine deaminase from Pectobacterium carotovorum subsp. carotovorum (strain PC1).